Consider the following 32-residue polypeptide: Conotoxin Cltx-4 (32 aa).

Residues Pro2, Pro24, Pro28, and Pro30 each carry the 4-hydroxyproline modification. Position 32 is a serine amide (Ser32).

Post-translationally, contains 4 disulfide bonds. Expressed by the venom duct.

The protein resides in the secreted. This is Conotoxin Cltx-4 from Californiconus californicus (California cone).